A 94-amino-acid chain; its full sequence is Sec-independent protein translocase protein TatA (94 aa).

Residues 1–21 (MFGRLGAPEIILILVVIILLF) traverse the membrane as a helical segment. Positions 44–94 (AKAMKSEGQESTPAGPPNTDEQPPAQRTIQAAPGDVTSSRPVSEPTDTTKR) are disordered. Positions 62-72 (TDEQPPAQRTI) are enriched in polar residues.

This sequence belongs to the TatA/E family. In terms of assembly, the Tat system comprises two distinct complexes: a TatABC complex, containing multiple copies of TatA, TatB and TatC subunits, and a separate TatA complex, containing only TatA subunits. Substrates initially bind to the TatABC complex, which probably triggers association of the separate TatA complex to form the active translocon.

Its subcellular location is the cell membrane. Part of the twin-arginine translocation (Tat) system that transports large folded proteins containing a characteristic twin-arginine motif in their signal peptide across membranes. TatA could form the protein-conducting channel of the Tat system. This Streptomyces avermitilis (strain ATCC 31267 / DSM 46492 / JCM 5070 / NBRC 14893 / NCIMB 12804 / NRRL 8165 / MA-4680) protein is Sec-independent protein translocase protein TatA.